The sequence spans 185 residues: Ribosome-recycling factor (185 aa).

Residues 138–157 form a disordered region; that stretch reads ELKKLEKDHTASEDEVKRAQ.

Belongs to the RRF family.

It localises to the cytoplasm. Responsible for the release of ribosomes from messenger RNA at the termination of protein biosynthesis. May increase the efficiency of translation by recycling ribosomes from one round of translation to another. This is Ribosome-recycling factor from Desulfitobacterium hafniense (strain DSM 10664 / DCB-2).